A 250-amino-acid polypeptide reads, in one-letter code: Coproheme decarboxylase (250 aa).

Fe-coproporphyrin III is bound by residues R131, 145-149, H172, and Q185; that span reads YPMNK. The active site involves Y145.

This sequence belongs to the ChdC family. Type 1 subfamily. Fe-coproporphyrin III is required as a cofactor.

The catalysed reaction is Fe-coproporphyrin III + 2 H2O2 + 2 H(+) = heme b + 2 CO2 + 4 H2O. It carries out the reaction Fe-coproporphyrin III + H2O2 + H(+) = harderoheme III + CO2 + 2 H2O. It catalyses the reaction harderoheme III + H2O2 + H(+) = heme b + CO2 + 2 H2O. The protein operates within porphyrin-containing compound metabolism; protoheme biosynthesis. Its function is as follows. Involved in coproporphyrin-dependent heme b biosynthesis. Catalyzes the decarboxylation of Fe-coproporphyrin III (coproheme) to heme b (protoheme IX), the last step of the pathway. The reaction occurs in a stepwise manner with a three-propionate intermediate. This chain is Coproheme decarboxylase, found in Staphylococcus aureus (strain Mu50 / ATCC 700699).